The sequence spans 543 residues: CTP synthase (543 aa).

The segment at 1-267 (MAKFVFVTGG…CREVLDVLNL (267 aa)) is amidoligase domain. S13 contacts CTP. S13 contacts UTP. 14–19 (SIGKGI) is a binding site for ATP. Y54 is a binding site for L-glutamine. D71 provides a ligand contact to ATP. Positions 71 and 141 each coordinate Mg(2+). Residues 148–150 (DIE), 188–193 (KTKPTQ), and K224 contribute to the CTP site. Residues 188-193 (KTKPTQ) and K224 each bind UTP. Residues 292-534 (KVALVGKYVQ…IEAAQQRLPN (243 aa)) enclose the Glutamine amidotransferase type-1 domain. G354 lines the L-glutamine pocket. C381 (nucleophile; for glutamine hydrolysis) is an active-site residue. L-glutamine contacts are provided by residues 382–385 (LGMQ), E405, and R462. Active-site residues include H507 and E509.

It belongs to the CTP synthase family. In terms of assembly, homotetramer.

It carries out the reaction UTP + L-glutamine + ATP + H2O = CTP + L-glutamate + ADP + phosphate + 2 H(+). The catalysed reaction is L-glutamine + H2O = L-glutamate + NH4(+). It catalyses the reaction UTP + NH4(+) + ATP = CTP + ADP + phosphate + 2 H(+). The protein operates within pyrimidine metabolism; CTP biosynthesis via de novo pathway; CTP from UDP: step 2/2. With respect to regulation, allosterically activated by GTP, when glutamine is the substrate; GTP has no effect on the reaction when ammonia is the substrate. The allosteric effector GTP functions by stabilizing the protein conformation that binds the tetrahedral intermediate(s) formed during glutamine hydrolysis. Inhibited by the product CTP, via allosteric rather than competitive inhibition. In terms of biological role, catalyzes the ATP-dependent amination of UTP to CTP with either L-glutamine or ammonia as the source of nitrogen. Regulates intracellular CTP levels through interactions with the four ribonucleotide triphosphates. The protein is CTP synthase of Synechococcus sp. (strain WH7803).